Consider the following 302-residue polypeptide: 4-hydroxy-tetrahydrodipicolinate synthase (302 aa).

Thr-55 lines the pyruvate pocket. The active-site Proton donor/acceptor is Tyr-144. Lys-172 serves as the catalytic Schiff-base intermediate with substrate. Pyruvate is bound at residue Val-214.

It belongs to the DapA family. In terms of assembly, homotetramer; dimer of dimers.

The protein resides in the cytoplasm. The catalysed reaction is L-aspartate 4-semialdehyde + pyruvate = (2S,4S)-4-hydroxy-2,3,4,5-tetrahydrodipicolinate + H2O + H(+). It functions in the pathway amino-acid biosynthesis; L-lysine biosynthesis via DAP pathway; (S)-tetrahydrodipicolinate from L-aspartate: step 3/4. Catalyzes the condensation of (S)-aspartate-beta-semialdehyde [(S)-ASA] and pyruvate to 4-hydroxy-tetrahydrodipicolinate (HTPA). The sequence is that of 4-hydroxy-tetrahydrodipicolinate synthase from Prochlorococcus marinus (strain MIT 9303).